The sequence spans 618 residues: Phostensin (618 aa).

A compositionally biased stretch (basic and acidic residues) spans R15 to L33. Positions R15 to G505 are disordered. The residue at position 54 (S54) is a Phosphoserine. The span at Q96–Q109 shows a compositional bias: low complexity. Basic and acidic residues-rich tracts occupy residues R110–L160 and L173–K197. Phosphoserine occurs at positions 131, 139, 181, and 201. Residue T205 is modified to Phosphothreonine. A Phosphoserine modification is found at S231. Composition is skewed to basic and acidic residues over residues D234–A245 and S271–T289. Positions E308–A319 are enriched in low complexity. Residues K348–E358 show a composition bias toward basic and acidic residues. Residues R429–D451 are compositionally biased toward pro residues. Residue S437 is modified to Phosphoserine. K462 bears the N6-acetyllysine mark. The span at A485 to G505 shows a compositional bias: low complexity. Phosphoserine is present on S535. Residues Y556–L594 form a disordered region. Over residues P572–A583 the composition is skewed to pro residues. Residues P585 to L594 are compositionally biased toward acidic residues.

In terms of assembly, interacts with Protein phosphatase 1 (PP1).

It localises to the cytoplasm. The protein resides in the cytoskeleton. May target protein phosphatase 1 to F-actin cytoskeleton. The sequence is that of Phostensin (PPP1R18) from Sus scrofa (Pig).